A 211-amino-acid polypeptide reads, in one-letter code: Histidine biosynthesis bifunctional protein HisIE (211 aa).

Residues 1–107 (MNKLIDFSKG…FNSEIESRFK (107 aa)) form a phosphoribosyl-AMP cyclohydrolase region. The tract at residues 108–211 (IQALAQTIHQ…KGERKKVQEW (104 aa)) is phosphoribosyl-ATP pyrophosphohydrolase.

It in the N-terminal section; belongs to the PRA-CH family. In the C-terminal section; belongs to the PRA-PH family.

Its subcellular location is the cytoplasm. The catalysed reaction is 1-(5-phospho-beta-D-ribosyl)-ATP + H2O = 1-(5-phospho-beta-D-ribosyl)-5'-AMP + diphosphate + H(+). The enzyme catalyses 1-(5-phospho-beta-D-ribosyl)-5'-AMP + H2O = 1-(5-phospho-beta-D-ribosyl)-5-[(5-phospho-beta-D-ribosylamino)methylideneamino]imidazole-4-carboxamide. Its pathway is amino-acid biosynthesis; L-histidine biosynthesis; L-histidine from 5-phospho-alpha-D-ribose 1-diphosphate: step 2/9. It functions in the pathway amino-acid biosynthesis; L-histidine biosynthesis; L-histidine from 5-phospho-alpha-D-ribose 1-diphosphate: step 3/9. This Staphylococcus epidermidis (strain ATCC 12228 / FDA PCI 1200) protein is Histidine biosynthesis bifunctional protein HisIE.